The following is a 602-amino-acid chain: Aspartate--tRNA(Asp/Asn) ligase (602 aa).

Glu187 is an L-aspartate binding site. The aspartate stretch occupies residues 211–214 (QQFK). Residues Arg233 and His461 each coordinate L-aspartate. 233-235 (RDE) provides a ligand contact to ATP. Glu495 lines the ATP pocket. Arg502 provides a ligand contact to L-aspartate. Residue 547-550 (GLDR) participates in ATP binding.

It belongs to the class-II aminoacyl-tRNA synthetase family. Type 1 subfamily. As to quaternary structure, homodimer.

It localises to the cytoplasm. The catalysed reaction is tRNA(Asx) + L-aspartate + ATP = L-aspartyl-tRNA(Asx) + AMP + diphosphate. Functionally, aspartyl-tRNA synthetase with relaxed tRNA specificity since it is able to aspartylate not only its cognate tRNA(Asp) but also tRNA(Asn). Reaction proceeds in two steps: L-aspartate is first activated by ATP to form Asp-AMP and then transferred to the acceptor end of tRNA(Asp/Asn). The polypeptide is Aspartate--tRNA(Asp/Asn) ligase (Chlorobium phaeovibrioides (strain DSM 265 / 1930) (Prosthecochloris vibrioformis (strain DSM 265))).